The sequence spans 248 residues: Opiorphin prepropeptide (248 aa).

An N-terminal signal peptide occupies residues 1 to 21 (MKLTFFLGLLALISCFTPSES). Gln-22 carries the post-translational modification Pyrrolidone carboxylic acid. The disordered stretch occupies residues 150 to 198 (DTTITTNPPTTATATTSTSTKPTMTISSSTVPISSTPEPATSISAATPA). Asn-218 carries an N-linked (GlcNAc...) asparagine glycan.

It belongs to the PROL1/PROL3 family. Abundantly expressed in lacrimal gland where it found in the secretory endpieces. Also expressed at modest levels in the submandibular gland.

The protein resides in the secreted. Its function is as follows. Opiorphin is an endogenous inhibitor of neprilysin and aminopeptidase N. Inhibits the breakdown of substance P, Mca-BK2 and Met-enkephalin by neprilysin in vitro with IC(50) values of 29 uM, 33 uM and 33 uM respectively. Inhibits the breakdown of Ala-pNA by aminopeptidase N in vitro with an IC(50) of 65 uM. Has a potent analgesic effect when administered to rats by intravenous injection. The protein is Opiorphin prepropeptide of Homo sapiens (Human).